The primary structure comprises 653 residues: Modification methylase StsI (653 aa).

It belongs to the N(4)/N(6)-methyltransferase family. Monomer.

It catalyses the reaction a 2'-deoxyadenosine in DNA + S-adenosyl-L-methionine = an N(6)-methyl-2'-deoxyadenosine in DNA + S-adenosyl-L-homocysteine + H(+). Functionally, an alpha subtype methylase that recognizes the double-stranded sequence 5'-GGATG-3' in one strand and 3'-CATCC-5' in the other, methylates A of both strands, and protects the DNA from cleavage by the StsI endonuclease. The 2 domains of the protein participate in modification of the two strands. The protein is Modification methylase StsI (stsIM) of Streptococcus sanguinis.